The primary structure comprises 651 residues: ATP-dependent RNA helicase DBP6 (651 aa).

Residues 1 to 114 form a disordered region; the sequence is MFAARFDPTK…ADVDDDGKHT (114 aa). Basic and acidic residues predominate over residues 7 to 17; the sequence is DPTKVVREEPK. The span at 27 to 42 shows a compositional bias: acidic residues; it reads DDVESSDSDQDIEDGV. Over residues 49–60 the composition is skewed to polar residues; the sequence is KEQSGTDVTTTR. A compositionally biased stretch (acidic residues) spans 69 to 85; it reads DSESESESESDSDDEMN. A compositionally biased stretch (basic and acidic residues) spans 100-113; the sequence is VSSKDADVDDDGKH. Residues 216–224 carry the Q motif motif; sequence TFPIQTAML. The region spanning 240 to 420 is the Helicase ATP-binding domain; the sequence is KNFTRRIGDI…DLQLYNPTLF (181 aa). 253–260 contacts ATP; it reads ASTGSGKT. A DEAD box motif is present at residues 360–363; the sequence is DEAD. The Helicase C-terminal domain maps to 452–611; that stretch reads YLLKLLEQLS…CKPISYNDSY (160 aa).

The protein belongs to the DEAD box helicase family. DDX51/DBP6 subfamily. As to quaternary structure, associated with pre-ribosomal particles.

Its subcellular location is the nucleus. It is found in the nucleolus. It carries out the reaction ATP + H2O = ADP + phosphate + H(+). Its function is as follows. ATP-binding RNA helicase involved in the biogenesis of 60S ribosomal subunits and is required for the normal formation of 25S and 5.8S rRNAs. In Candida glabrata (strain ATCC 2001 / BCRC 20586 / JCM 3761 / NBRC 0622 / NRRL Y-65 / CBS 138) (Yeast), this protein is ATP-dependent RNA helicase DBP6 (DBP6).